Here is a 372-residue protein sequence, read N- to C-terminus: Cyanuric acid amidohydrolase (372 aa).

The segment at 1–105 is RU A; sequence MPTTLRRAHV…IVFEAREVDE (105 aa). Substrate contacts are provided by residues Arg-56 and 84–85; that span reads SG. Residues 115 to 252 form an RU B region; that stretch reads SLALGRARTP…HEIMVAGMSR (138 aa). The active site involves Lys-165. Substrate is bound by residues Arg-197 and 235–236; that span reads SG. Ser-235 acts as the Nucleophile in catalysis. The segment at 258–372 is RU C; that stretch reads LAIDHGVMRD…GPVAIIVERT (115 aa). Glu-305 lines the Mg(2+) pocket. Residues Arg-332 and 351–352 contribute to the substrate site; that span reads SG. Residues Ala-354, Gln-357, Gly-358, Pro-359, and Gly-362 each coordinate Mg(2+).

The protein belongs to the cyclic amide hydrolase (CyAH) family. Homotetramer.

The catalysed reaction is cyanurate + H2O = 1-carboxybiuret + H(+). The protein operates within xenobiotic degradation; atrazine degradation; biuret from cyanurate: step 1/1. With respect to regulation, inhibited by barbituric acid. Functionally, responsible for the hydrolysis of cyanuric acid, an intermediate formed during catabolism of s-triazine based compounds in herbicides such as atrazine and polymers such as melamine. Catalyzes the hydrolytic opening of the s-triazine ring of cyanuric acid (2,4,6-trihydroxy-s-triazine) to yield carbon dioxide and carboxybiuret, which spontaneously decarboxylates to biuret. The sequence is that of Cyanuric acid amidohydrolase from Bradyrhizobium sp. (strain ORS 375).